The sequence spans 792 residues: DEAD-box ATP-dependent RNA helicase 40 (792 aa).

Low complexity predominate over residues 1-16 (MSAGTAPAAPRYAPDD). Disordered stretches follow at residues 1 to 25 (MSAGTAPAAPRYAPDDPSLPKPWRG) and 44 to 118 (TQYE…PLPA). A WW domain is found at 17 to 51 (PSLPKPWRGLVDGTTGYLYYWNPETNITQYEKPLP). Pro residues predominate over residues 52-68 (PEDQLPPPPPLPPPPPR). Composition is skewed to basic and acidic residues over residues 70-80 (GRGDRDRDRRD) and 88-108 (PRRDHRDRDRDRDRRHDDHRS). The Q motif motif lies at 150–178 (TSFETGGFPPEILKEIQRAGFSSPTPIQA). Residues 181 to 355 (WPIALQCQDV…EDLLVHPVQV (175 aa)) form the Helicase ATP-binding domain. 194–201 (AKTGSGKT) contributes to the ATP binding site. A DEAD box motif is present at residues 303–306 (DEAD). In terms of domain architecture, Helicase C-terminal spans 384–528 (RLEQILRSQD…RVPRDLADMA (145 aa)). Residues 523–792 (DLADMASRGG…NATVQNGGDN (270 aa)) form a disordered region. Composition is skewed to basic and acidic residues over residues 543–560 (TRSDRGGSHSELDSRYGG) and 572–588 (DSSRSSRRHDYGDDGRS). Basic residues-rich tracts occupy residues 589-599 (RRSGRGRSRSR) and 609-654 (RSPK…RRHE). Residues 668–708 (GHGERKRTPEADPSRNHTNHSDPKDDRHPEDGKVGKVDLDR) show a composition bias toward basic and acidic residues. Over residues 725 to 739 (GKTSRSVSPGNQVEG) the composition is skewed to polar residues. Residues 764 to 777 (DEEEGMIDEDGEIA) are compositionally biased toward acidic residues.

The protein belongs to the DEAD box helicase family. DDX5/DBP2 subfamily.

It localises to the nucleus. It carries out the reaction ATP + H2O = ADP + phosphate + H(+). ATP-dependent RNA helicase involved nonsense-mediated mRNA decay and ribosome biogenesis through rRNA processing. The chain is DEAD-box ATP-dependent RNA helicase 40 from Oryza sativa subsp. japonica (Rice).